Here is a 268-residue protein sequence, read N- to C-terminus: Hydroxyethylthiazole kinase (268 aa).

Met-45 contacts substrate. Residues Arg-121 and Thr-167 each coordinate ATP. Gly-194 contributes to the substrate binding site.

The protein belongs to the Thz kinase family. It depends on Mg(2+) as a cofactor.

It carries out the reaction 5-(2-hydroxyethyl)-4-methylthiazole + ATP = 4-methyl-5-(2-phosphooxyethyl)-thiazole + ADP + H(+). It participates in cofactor biosynthesis; thiamine diphosphate biosynthesis; 4-methyl-5-(2-phosphoethyl)-thiazole from 5-(2-hydroxyethyl)-4-methylthiazole: step 1/1. Functionally, catalyzes the phosphorylation of the hydroxyl group of 4-methyl-5-beta-hydroxyethylthiazole (THZ). This Bacillus thuringiensis subsp. konkukian (strain 97-27) protein is Hydroxyethylthiazole kinase.